The sequence spans 273 residues: Rhamnulose-1-phosphate aldolase (273 aa).

Residue Glu117 is part of the active site. The Zn(2+) site is built by His140, His142, and His211.

Belongs to the aldolase class II family. RhaD subfamily. Zn(2+) serves as cofactor.

Its subcellular location is the cytoplasm. It catalyses the reaction L-rhamnulose 1-phosphate = (S)-lactaldehyde + dihydroxyacetone phosphate. It functions in the pathway carbohydrate degradation; L-rhamnose degradation; glycerone phosphate from L-rhamnose: step 3/3. Functionally, catalyzes the reversible cleavage of L-rhamnulose-1-phosphate to dihydroxyacetone phosphate (DHAP) and L-lactaldehyde. The polypeptide is Rhamnulose-1-phosphate aldolase (Listeria monocytogenes serotype 4b (strain F2365)).